We begin with the raw amino-acid sequence, 350 residues long: Ion-translocating oxidoreductase complex subunit D (350 aa).

The next 3 membrane-spanning stretches (helical) occupy residues 20–39, 89–109, and 123–143; these read IMML…WYFF, IPPL…VIIA, and PAMI…TNWL. Thr-187 is subject to FMN phosphoryl threonine. The next 5 membrane-spanning stretches (helical) occupy residues 215–235, 244–264, 267–287, 301–321, and 322–342; these read LAGL…LFLL, IPVS…LIAP, FLSP…FFIL, LVFG…GGYP, and DGVA…DYYT.

Belongs to the NqrB/RnfD family. In terms of assembly, the complex is composed of six subunits: RnfA, RnfB, RnfC, RnfD, RnfE and RnfG. The cofactor is FMN.

Its subcellular location is the cell inner membrane. In terms of biological role, part of a membrane-bound complex that couples electron transfer with translocation of ions across the membrane. The chain is Ion-translocating oxidoreductase complex subunit D from Cronobacter sakazakii (strain ATCC BAA-894) (Enterobacter sakazakii).